The sequence spans 234 residues: Cyclo(L-leucyl-L-leucyl) synthase (234 aa).

Serine 33 functions as the Nucleophile in the catalytic mechanism. Substrate is bound by residues asparagine 36, 179–183 (YIFAE), tyrosine 203, and 208–209 (SI).

It belongs to the CDPS family.

It carries out the reaction 2 L-leucyl-tRNA(Leu) = cyclo(L-leucyl-L-leucyl) + 2 tRNA(Leu) + 2 H(+). In terms of biological role, it uses activated amino acids in the form of aminoacyl-tRNAs (aa-tRNAs) as substrates to catalyze the ATP-independent formation of cyclodipeptides which are intermediates in diketopiperazine (DKP) biosynthetic pathways. Catalyzes the formation of cyclo(L-Leu-L-Leu) (cLL) from L-leucyl-tRNA(Leu). Can incorporate various nonpolar residues, such as L-phenylalanine, L-leucine and L-methionine, into cyclodipeptides. This Photorhabdus laumondii subsp. laumondii (strain DSM 15139 / CIP 105565 / TT01) (Photorhabdus luminescens subsp. laumondii) protein is Cyclo(L-leucyl-L-leucyl) synthase.